Consider the following 497-residue polypeptide: mRNA cleavage and polyadenylation factor CLP1 (497 aa).

ATP contacts are provided by residues E34, K73, and 157–162; that span reads HSGKTS.

It belongs to the Clp1 family. Clp1 subfamily. Component of a pre-mRNA cleavage factor complex. Interacts directly with PCF11.

The protein resides in the nucleus. In terms of biological role, required for endonucleolytic cleavage during polyadenylation-dependent pre-mRNA 3'-end formation. The chain is mRNA cleavage and polyadenylation factor CLP1 from Debaryomyces hansenii (strain ATCC 36239 / CBS 767 / BCRC 21394 / JCM 1990 / NBRC 0083 / IGC 2968) (Yeast).